Consider the following 504-residue polypeptide: 2,3-bisphosphoglycerate-independent phosphoglycerate mutase (504 aa).

The Mn(2+) site is built by aspartate 9 and serine 59. Residue serine 59 is the Phosphoserine intermediate of the active site. Residues histidine 120, arginine 149 to aspartate 150, arginine 181, arginine 187, arginine 253 to arginine 256, and lysine 326 each bind substrate. Mn(2+) contacts are provided by aspartate 393, histidine 397, aspartate 434, histidine 435, and histidine 451.

The protein belongs to the BPG-independent phosphoglycerate mutase family. Mn(2+) is required as a cofactor.

It carries out the reaction (2R)-2-phosphoglycerate = (2R)-3-phosphoglycerate. It participates in carbohydrate degradation; glycolysis; pyruvate from D-glyceraldehyde 3-phosphate: step 3/5. Functionally, catalyzes the interconversion of 2-phosphoglycerate and 3-phosphoglycerate. This chain is 2,3-bisphosphoglycerate-independent phosphoglycerate mutase, found in Haloquadratum walsbyi (strain DSM 16790 / HBSQ001).